A 105-amino-acid polypeptide reads, in one-letter code: Chloroacetanilide N-alkylformylase 1, ferredoxin component (105 aa).

Residues 2 to 105 (PTIIVTTRDG…GLRVAIAPED (104 aa)) form the 2Fe-2S ferredoxin-type domain. Residues Cys40, Cys46, Cys49, and Cys86 each contribute to the [2Fe-2S] cluster site.

It belongs to the adrenodoxin/putidaredoxin family. The chloroacetanilide N-alkylformylase multicomponent enzyme system is composed of an oxygenase component (CndA) and an electron transfer component formed by a ferredoxin reductase (CndC1) and a ferredoxin (CndB1). In vitro, chloroacetanilide N-alkylformylase assays in which CndB1 is substituted for CndB2 demonstrate that the two enzymes possess nearly identical activities. Requires [2Fe-2S] cluster as cofactor.

Functionally, component of the chloroacetanilide N-alkylformylase multicomponent enzyme system involved in the degradation of chloroacetanilide herbicides (N-alkoxyalkyl-N-chloroacetyl-substituted aniline derivatives). In vitro, functions as an intermediate electron transfer protein. The protein is Chloroacetanilide N-alkylformylase 1, ferredoxin component of Rhizorhabdus wittichii (strain DC-6 / KACC 16600) (Sphingomonas wittichii).